The chain runs to 357 residues: MEENKQRVKSMINILQLVAPGTPLREGIDNVLRAQTGGLIVLGYNEQIKSIVDGGFHINCAFSPASLYELAKMDGALILNETGSKILISNAQLVPESSIDSIETGMRHRTAERVAKQTGSLVVAISQRRNVITLYQGNLRYTLKDIGVILTKANQAIQTLEKYKAVWNDGITNLGILEFEEVVTMSEVVHVLHSVEMVLRIKNEILSYIHELGTEGRLIRLQLTELLADLEAEAALLIKDYYQEKTQDHHQILKKLQELANTQLLEDSDLVKLLGYPGQTSLEESVTPRGYRITSKISRVPPLIIENLINRFKTLQGVCRATINELDDVEGIGEVRAKKIREGLKRIQEHLYMSRHN.

The DAC domain maps to 8 to 146; the sequence is VKSMINILQL…GNLRYTLKDI (139 aa). Residues G75, L93, and 106–110 each bind ATP; that span reads MRHRT.

Belongs to the DisA family. As to quaternary structure, homooctamer. Mg(2+) serves as cofactor.

It catalyses the reaction 2 ATP = 3',3'-c-di-AMP + 2 diphosphate. Participates in a DNA-damage check-point that is active prior to asymmetric division when DNA is damaged. DisA forms globular foci that rapidly scan along the chromosomes during sporulation, searching for lesions. When a lesion is present, DisA pauses at the lesion site. This triggers a cellular response that culminates in a temporary block in sporulation initiation. In terms of biological role, also has diadenylate cyclase activity, catalyzing the condensation of 2 ATP molecules into cyclic di-AMP (c-di-AMP). c-di-AMP acts as a signaling molecule that couples DNA integrity with progression of sporulation. The rise in c-di-AMP level generated by DisA while scanning the chromosome, operates as a positive signal that advances sporulation; upon encountering a lesion, the DisA focus arrests at the damaged site and halts c-di-AMP synthesis. This is DNA integrity scanning protein DisA from Bacillus cereus (strain AH187).